Here is a 282-residue protein sequence, read N- to C-terminus: Elongation factor Ts (282 aa).

Residues 80 to 83 (TDFV) are involved in Mg(2+) ion dislocation from EF-Tu.

The protein belongs to the EF-Ts family.

It localises to the cytoplasm. Associates with the EF-Tu.GDP complex and induces the exchange of GDP to GTP. It remains bound to the aminoacyl-tRNA.EF-Tu.GTP complex up to the GTP hydrolysis stage on the ribosome. The sequence is that of Elongation factor Ts from Chlamydia trachomatis serovar A (strain ATCC VR-571B / DSM 19440 / HAR-13).